Reading from the N-terminus, the 295-residue chain is ATP synthase gamma chain (295 aa).

Belongs to the ATPase gamma chain family. In terms of assembly, F-type ATPases have 2 components, CF(1) - the catalytic core - and CF(0) - the membrane proton channel. CF(1) has five subunits: alpha(3), beta(3), gamma(1), delta(1), epsilon(1). CF(0) has three main subunits: a, b and c.

The protein resides in the cell membrane. Produces ATP from ADP in the presence of a proton gradient across the membrane. The gamma chain is believed to be important in regulating ATPase activity and the flow of protons through the CF(0) complex. This is ATP synthase gamma chain from Desulforudis audaxviator (strain MP104C).